A 142-amino-acid chain; its full sequence is MVLSAADKNNVKGIFTKIAGHAEEYGAETLERMFTTYPPTKTYFPHFDLSHGSAQIKGHGKKVVAALIEAANHIDDIAGTLSKLSDLHAHKLRVDPVNFKLLGQCFLVVVAIHHPAALTPEVHASLDKFLCAVGTVLTAKYR.

One can recognise a Globin domain in the interval 2-142 (VLSAADKNNV…VGTVLTAKYR (141 aa)). His59 is a binding site for O2. Position 88 (His88) interacts with heme b.

This sequence belongs to the globin family. Heterotetramer of two alpha chains and two beta chains. As to expression, red blood cells.

In terms of biological role, involved in oxygen transport from the lung to the various peripheral tissues. In Gallus gallus (Chicken), this protein is Hemoglobin subunit alpha-A (HBAA).